We begin with the raw amino-acid sequence, 718 residues long: Polyribonucleotide nucleotidyltransferase (718 aa).

Mg(2+) contacts are provided by Asp496 and Asp502. Positions 563–622 (PRLLTIKIDSDMIGLVIGPGGKTIKGITEETGAKIDIEDDGTVTISAVDENKAKRARNII) constitute a KH domain. The S1 motif domain occupies 632–700 (GDVYAGRITR…NKGRINLTRL (69 aa)).

The protein belongs to the polyribonucleotide nucleotidyltransferase family. Mg(2+) is required as a cofactor.

It is found in the cytoplasm. The enzyme catalyses RNA(n+1) + phosphate = RNA(n) + a ribonucleoside 5'-diphosphate. Its function is as follows. Involved in mRNA degradation. Catalyzes the phosphorolysis of single-stranded polyribonucleotides processively in the 3'- to 5'-direction. This chain is Polyribonucleotide nucleotidyltransferase, found in Nostoc punctiforme (strain ATCC 29133 / PCC 73102).